Here is an 891-residue protein sequence, read N- to C-terminus: Alanine--tRNA ligase (891 aa).

4 residues coordinate Zn(2+): histidine 564, histidine 568, cysteine 681, and histidine 685.

This sequence belongs to the class-II aminoacyl-tRNA synthetase family. Zn(2+) serves as cofactor.

Its subcellular location is the cytoplasm. The catalysed reaction is tRNA(Ala) + L-alanine + ATP = L-alanyl-tRNA(Ala) + AMP + diphosphate. Catalyzes the attachment of alanine to tRNA(Ala) in a two-step reaction: alanine is first activated by ATP to form Ala-AMP and then transferred to the acceptor end of tRNA(Ala). Also edits incorrectly charged Ser-tRNA(Ala) and Gly-tRNA(Ala) via its editing domain. The chain is Alanine--tRNA ligase from Methylorubrum populi (strain ATCC BAA-705 / NCIMB 13946 / BJ001) (Methylobacterium populi).